The primary structure comprises 285 residues: Pantothenate synthetase (285 aa).

30–37 (MGNLHRGH) serves as a coordination point for ATP. His37 (proton donor) is an active-site residue. Position 61 (Gln61) interacts with (R)-pantoate. Residue Gln61 coordinates beta-alanine. ATP is bound at residue 149–152 (GRKD). Gln155 provides a ligand contact to (R)-pantoate. Residues Val178 and 186-189 (LSSR) contribute to the ATP site.

Belongs to the pantothenate synthetase family. Homodimer.

It localises to the cytoplasm. It catalyses the reaction (R)-pantoate + beta-alanine + ATP = (R)-pantothenate + AMP + diphosphate + H(+). Its pathway is cofactor biosynthesis; (R)-pantothenate biosynthesis; (R)-pantothenate from (R)-pantoate and beta-alanine: step 1/1. Catalyzes the condensation of pantoate with beta-alanine in an ATP-dependent reaction via a pantoyl-adenylate intermediate. This Halorhodospira halophila (strain DSM 244 / SL1) (Ectothiorhodospira halophila (strain DSM 244 / SL1)) protein is Pantothenate synthetase.